Reading from the N-terminus, the 221-residue chain is Small ribosomal subunit protein uS2 (221 aa).

Belongs to the universal ribosomal protein uS2 family.

In Methanococcus maripaludis (strain C6 / ATCC BAA-1332), this protein is Small ribosomal subunit protein uS2.